Consider the following 1098-residue polypeptide: Platelet-derived growth factor receptor beta (1098 aa).

The signal sequence occupies residues 1–31 (MGLPGVIPALVLRGQLLLSVLWLLGPQTSRG). Residues 32–531 (LVITPPGPEF…VVPHSLPFKV (500 aa)) lie on the Extracellular side of the membrane. Ig-like C2-type domains lie at 33-119 (VITP…YIFV), 128-209 (PMDS…YSLQ), 213-308 (INVS…INIS), 330-402 (HRSR…HEDD), and 415-523 (PVRV…VTVV). N-linked (GlcNAc...) asparagine glycosylation is found at Asn-44, Asn-88, and Asn-102. The cysteines at positions 53 and 99 are disulfide-linked. The cysteines at positions 148 and 189 are disulfide-linked. Residue Asn-214 is glycosylated (N-linked (GlcNAc...) asparagine). A disulfide bond links Cys-234 and Cys-290. N-linked (GlcNAc...) asparagine glycosylation is found at Asn-291, Asn-306, Asn-353, Asn-370, Asn-444, Asn-467, and Asn-478. Residues Cys-435 and Cys-507 are joined by a disulfide bond. A helical transmembrane segment spans residues 532–552 (VVISAILALVVLTVISLIILI). Residues 553–1098 (MLWQKKPRYE…PLAEAEDSFL (546 aa)) lie on the Cytoplasmic side of the membrane. A phosphotyrosine; by autocatalysis mark is found at Tyr-561, Tyr-578, and Tyr-580. Residues 599-961 (LVLGRTLGSG…QLVLLLERLL (363 aa)) enclose the Protein kinase domain. Residues 605 to 613 (LGSGAFGQV) and Lys-633 each bind ATP. A Phosphotyrosine; by ABL1 and ABL2 modification is found at Tyr-685. Residues Tyr-715, Tyr-739, Tyr-750, Tyr-762, Tyr-770, Tyr-774, and Tyr-777 each carry the phosphotyrosine; by autocatalysis modification. Residue Asp-825 is the Proton acceptor of the active site. Position 856 is a phosphotyrosine; by autocatalysis (Tyr-856). A phosphotyrosine; by ABL1 and ABL2 mark is found at Tyr-933 and Tyr-969. A phosphotyrosine; by autocatalysis mark is found at Tyr-1008 and Tyr-1020. Residues 1016–1098 (SDNDYIIPLP…PLAEAEDSFL (83 aa)) are disordered. The segment covering 1042–1059 (SLASSTLNEVNTSSTISC) has biased composition (polar residues). Low complexity predominate over residues 1062–1082 (PLELQEEPQQAEPEAQLEQPQ).

The protein belongs to the protein kinase superfamily. Tyr protein kinase family. CSF-1/PDGF receptor subfamily. As to quaternary structure, interacts with homodimeric PDGFB and PDGFD, and with heterodimers formed by PDGFA and PDGFB. May also interact with homodimeric PDGFC. Monomer in the absence of bound ligand. Interaction with homodimeric PDGFB, heterodimers formed by PDGFA and PDGFB or homodimeric PDGFD, leads to receptor dimerization, where both PDGFRA homodimers and heterodimers with PDGFRB are observed. Interacts with SH2B2/APS. Interacts directly (tyrosine phosphorylated) with SHB. Interacts (tyrosine phosphorylated) with PIK3R1 and RASA1. Interacts (tyrosine phosphorylated) with CBL. Interacts (tyrosine phosphorylated) with SRC and SRC family kinases. Interacts (tyrosine phosphorylated) with PIK3C2B, maybe indirectly. Interacts (tyrosine phosphorylated) with SHC1, GRB7, GRB10 and NCK1. Interaction with GRB2 is mediated by SHC1. Interacts (via C-terminus) with NHERF1. Post-translationally, autophosphorylated on tyrosine residues upon ligand binding. Autophosphorylation occurs in trans, i.e. one subunit of the dimeric receptor phosphorylates tyrosine residues on the other subunit. Phosphorylation at Tyr-578, and to a lesser degree, Tyr-580 is important for interaction with SRC. Phosphorylation at Tyr-715 is important for interaction with GRB2. Phosphorylation at Tyr-739 and Tyr-750 is important for interaction with PIK3R1. Phosphorylation at Tyr-750 is important for interaction with NCK1. Phosphorylation at Tyr-770 and Tyr-856 is important for interaction with RASA1/GAP. Phosphorylation at Tyr-856 is important for efficient phosphorylation of PLCG1 and PTPN11, resulting in increased phosphorylation of AKT1, MAPK1/ERK2 and/or MAPK3/ERK1, PDCD6IP/ALIX and STAM, and in increased cell proliferation. Phosphorylation at Tyr-1008 is important for interaction with PTPN11. Phosphorylation at Tyr-1008 and Tyr-1020 is important for interaction with PLCG1. Dephosphorylated by PTPRJ at Tyr-750, Tyr-856, Tyr-1008 and Tyr-1020. Dephosphorylated by PTPN2 at Tyr-578 and Tyr-1020. N-glycosylated. In terms of processing, ubiquitinated. After autophosphorylation, the receptor is polyubiquitinated, leading to its degradation. Weakly expressed in glomerular mesangial cells and interstitial cells. Up-regulated in areas of renal fibrosis. In mice with unilateral ureteral obstruction, increased expression in interstitial cells at day 4 and expression is markedly elevated at day 7 and is maximal at day 14.

Its subcellular location is the cell membrane. It localises to the cytoplasmic vesicle. The protein localises to the lysosome lumen. It catalyses the reaction L-tyrosyl-[protein] + ATP = O-phospho-L-tyrosyl-[protein] + ADP + H(+). With respect to regulation, present in an inactive conformation in the absence of bound ligand. Binding of PDGFB and/or PDGFD leads to dimerization and activation by autophosphorylation on tyrosine residues. Functionally, tyrosine-protein kinase that acts as a cell-surface receptor for homodimeric PDGFB and PDGFD and for heterodimers formed by PDGFA and PDGFB, and plays an essential role in the regulation of embryonic development, cell proliferation, survival, differentiation, chemotaxis and migration. Plays an essential role in blood vessel development by promoting proliferation, migration and recruitment of pericytes and smooth muscle cells to endothelial cells. Plays a role in the migration of vascular smooth muscle cells and the formation of neointima at vascular injury sites. Required for normal development of the cardiovascular system. Required for normal recruitment of pericytes (mesangial cells) in the kidney glomerulus, and for normal formation of a branched network of capillaries in kidney glomeruli. Promotes rearrangement of the actin cytoskeleton and the formation of membrane ruffles. Binding of its cognate ligands - homodimeric PDGFB, heterodimers formed by PDGFA and PDGFB or homodimeric PDGFD -leads to the activation of several signaling cascades; the response depends on the nature of the bound ligand and is modulated by the formation of heterodimers between PDGFRA and PDGFRB. Phosphorylates PLCG1, PIK3R1, PTPN11, RASA1/GAP, CBL, SHC1 and NCK1. Activation of PLCG1 leads to the production of the cellular signaling molecules diacylglycerol and inositol 1,4,5-trisphosphate, mobilization of cytosolic Ca(2+) and the activation of protein kinase C. Phosphorylation of PIK3R1, the regulatory subunit of phosphatidylinositol 3-kinase, leads to the activation of the AKT1 signaling pathway. Phosphorylation of SHC1, or of the C-terminus of PTPN11, creates a binding site for GRB2, resulting in the activation of HRAS, RAF1 and down-stream MAP kinases, including MAPK1/ERK2 and/or MAPK3/ERK1. Promotes phosphorylation and activation of SRC family kinases. Promotes phosphorylation of PDCD6IP/ALIX and STAM. Receptor signaling is down-regulated by protein phosphatases that dephosphorylate the receptor and its down-stream effectors, and by rapid internalization of the activated receptor. The polypeptide is Platelet-derived growth factor receptor beta (Pdgfrb) (Mus musculus (Mouse)).